We begin with the raw amino-acid sequence, 90 residues long: Neurotoxin LmNaTx19 (90 aa).

A signal peptide spans 1-19; it reads MNHLILIVAMCLMVIGVQC. Residues 21 to 80 enclose the LCN-type CS-alpha/beta domain; it reads KDGYLYDDVDCKFSCWDNEYCRKLCKSKKAVGGYCWRWRFSCYCTGLPDNEKTEGTYKCG. Cystine bridges form between Cys-31-Cys-79, Cys-35-Cys-55, Cys-41-Cys-62, and Cys-45-Cys-64.

Belongs to the long (4 C-C) scorpion toxin superfamily. Sodium channel inhibitor family. Alpha subfamily. Expressed by the venom gland.

Its subcellular location is the secreted. Binds voltage-independently at site-3 of voltage-gated sodium channels (Nav) and inhibits the inactivation of the activated channels, thereby blocking neuronal transmission. This is Neurotoxin LmNaTx19 from Lychas mucronatus (Chinese swimming scorpion).